A 451-amino-acid polypeptide reads, in one-letter code: Cobalamin reductase PduS (451 aa).

4Fe-4S ferredoxin-type domains follow at residues 255-284 (TVLS…HELS) and 300-330 (PQLL…MRIN). Positions 264, 267, 270, 274, 309, 312, 315, and 320 each coordinate [4Fe-4S] cluster.

It belongs to the PduS cobalamin reductase family. In terms of assembly, monomeric when purified anaerobically, dimeric under aerobic conditions. Forms a complex with PduO. Interacts with PduT, probably via the N-terminus of PduS. [4Fe-4S] cluster serves as cofactor. Requires FMN as cofactor.

The protein resides in the bacterial microcompartment. Its pathway is polyol metabolism; 1,2-propanediol degradation. Its function is as follows. A protein that aids in conversion of cob(III)alamin to cob(II)alamin and then to cob(I)alamin in the bacterial microcompartment (BMC) dedicated to 1,2-propanediol (1,2-PD) degradation. The latter step requires PduO. No free cob(I)alamin is released, suggesting a complex is formed with PduO that finishes conversion to adenosylcobalamin. PduS and PduO allow regeneration of the adenosylcobalamin cofactor within the BMC. Another study showed reduction of cob(II)alamin to cob(I)alamin in the absence of PduO. Both reactions require NADH. Cyanocobalamin (CN-Cbl) is not a substrate for the first reaction. Cobalamin reduction probably occurs spontaneously in the presence of free reduced flavin nucleotides, this protein may be involved in electron transfer for this reduction. The 1,2-PD-specific bacterial microcompartment (BMC) concentrates low levels of 1,2-PD catabolic enzymes, concentrates volatile reaction intermediates thus enhancing pathway flux and keeps the level of toxic, mutagenic propionaldehyde low. The protein is Cobalamin reductase PduS of Salmonella typhimurium (strain LT2 / SGSC1412 / ATCC 700720).